The sequence spans 216 residues: Transmembrane emp24 domain-containing protein eca (216 aa).

The N-terminal stretch at 1-20 (MRNQFICVALLLCALNSACG) is a signal peptide. The Lumenal segment spans residues 21-183 (LYFHISETER…RHTSESTNSR (163 aa)). Residues 30–126 (RKCFIEEVPD…QLRVHLDIQV (97 aa)) form the GOLD domain. Positions 134–164 (ANVAQKEKLTELQLRIRQLLDQVDQITKEQN) form a coiled coil. A helical transmembrane segment spans residues 184-203 (VLWWSLAQTVVLVCMGFWQM). Over 204-216 (RHLKSFFEAKKLV) the chain is Cytoplasmic. The Prevents secretion from ER signature appears at 213–216 (KKLV).

This sequence belongs to the EMP24/GP25L family.

It localises to the endoplasmic reticulum membrane. In terms of biological role, eca and bai are essential, though not redundant, for dorsoventral patterning of the embryo. Specifically required during early embryogenesis for the activity of maternal tkv, while the zygotic tkv is not affected. Involved in Golgi organization. The chain is Transmembrane emp24 domain-containing protein eca from Drosophila willistoni (Fruit fly).